We begin with the raw amino-acid sequence, 352 residues long: NAD(+)-dependent homoserine dehydrogenase (352 aa).

This sequence belongs to the homoserine dehydrogenase family.

It carries out the reaction L-homoserine + NAD(+) = L-aspartate 4-semialdehyde + NADH + H(+). Its function is as follows. Dehydrogenase involved in the degradation of canavanine, the delta-oxa-analog of arginine, allowing growth on canavanine as sole nitrogen and carbon source. Catalyzes the conversion of homoserine and NAD(+) to aspartate-semialdehyde and NADH. Is highly specific for NAD(+) and cannot use NADP(+). The sequence is that of NAD(+)-dependent homoserine dehydrogenase from Pseudomonas canavaninivorans.